The sequence spans 145 residues: Large ribosomal subunit protein uL15 (145 aa).

A disordered region spans residues Met1–Gly52. Over residues Arg21–Ala31 the composition is skewed to gly residues.

Belongs to the universal ribosomal protein uL15 family. In terms of assembly, part of the 50S ribosomal subunit.

Functionally, binds to the 23S rRNA. This chain is Large ribosomal subunit protein uL15, found in Acidithiobacillus ferrooxidans (strain ATCC 53993 / BNL-5-31) (Leptospirillum ferrooxidans (ATCC 53993)).